We begin with the raw amino-acid sequence, 170 residues long: Disulfide bond formation protein B 1 (170 aa).

At 1–14 the chain is on the cytoplasmic side; it reads MNDYTLAIRRERRL. A helical transmembrane segment spans residues 15 to 31; the sequence is LMLLGWVCIALLAGALY. Residues 32 to 49 lie on the Periplasmic side of the membrane; that stretch reads LQYVKNEDPCPLCIIQRY. The cysteines at positions 41 and 44 are disulfide-linked. Residues 50 to 64 form a helical membrane-spanning segment; the sequence is FFCAIGIFAFLAAGI. Topologically, residues 65 to 71 are cytoplasmic; it reads RNWRGVW. A helical transmembrane segment spans residues 72–89; the sequence is VLELLIAIAAAGGVGTAA. Residues 90–144 lie on the Periplasmic side of the membrane; the sequence is RHLTIQMNPGFSCGFDTLQPIVDSLPPAQWFPGMFKVAGLCETVYPPIFGILLPG. A disulfide bridge connects residues Cys102 and Cys130. The helical transmembrane segment at 145 to 163 threads the bilayer; it reads WSLIGFAVILIAVVASLWR. Residues 164–170 are Cytoplasmic-facing; that stretch reads HRRKLVG.

The protein belongs to the DsbB family.

Its subcellular location is the cell inner membrane. Required for disulfide bond formation in some periplasmic proteins. Acts by oxidizing the DsbA protein. This Burkholderia lata (strain ATCC 17760 / DSM 23089 / LMG 22485 / NCIMB 9086 / R18194 / 383) protein is Disulfide bond formation protein B 1.